We begin with the raw amino-acid sequence, 601 residues long: Glutamine--fructose-6-phosphate aminotransferase [isomerizing] (601 aa).

Cys2 acts as the Nucleophile; for GATase activity in catalysis. Residues 2–218 form the Glutamine amidotransferase type-2 domain; sequence CGIVGYIGYD…DHEIVIVKRD (217 aa). SIS domains lie at 284 to 423 and 453 to 591; these read IIND…NHGR and IATD…VDKP. Lys596 (for Fru-6P isomerization activity) is an active-site residue.

In terms of assembly, homodimer.

It localises to the cytoplasm. It carries out the reaction D-fructose 6-phosphate + L-glutamine = D-glucosamine 6-phosphate + L-glutamate. In terms of biological role, catalyzes the first step in hexosamine metabolism, converting fructose-6P into glucosamine-6P using glutamine as a nitrogen source. In Staphylococcus epidermidis (strain ATCC 35984 / DSM 28319 / BCRC 17069 / CCUG 31568 / BM 3577 / RP62A), this protein is Glutamine--fructose-6-phosphate aminotransferase [isomerizing].